A 296-amino-acid polypeptide reads, in one-letter code: 4-diphosphocytidyl-2-C-methyl-D-erythritol kinase (296 aa).

Residue lysine 13 is part of the active site. An ATP-binding site is contributed by 104–114 (PMGGGIGGGSS). Aspartate 146 is a catalytic residue.

The protein belongs to the GHMP kinase family. IspE subfamily.

The enzyme catalyses 4-CDP-2-C-methyl-D-erythritol + ATP = 4-CDP-2-C-methyl-D-erythritol 2-phosphate + ADP + H(+). The protein operates within isoprenoid biosynthesis; isopentenyl diphosphate biosynthesis via DXP pathway; isopentenyl diphosphate from 1-deoxy-D-xylulose 5-phosphate: step 3/6. Catalyzes the phosphorylation of the position 2 hydroxy group of 4-diphosphocytidyl-2C-methyl-D-erythritol. The chain is 4-diphosphocytidyl-2-C-methyl-D-erythritol kinase from Hahella chejuensis (strain KCTC 2396).